Reading from the N-terminus, the 314-residue chain is Melanoma-associated antigen 12 (314 aa).

Over residues 1–14 (MPLEQRSQHCKPEE) the composition is skewed to basic and acidic residues. The tract at residues 1 to 72 (MPLEQRSQHC…HSPQGASTLP (72 aa)) is disordered. Residues 17-44 (EAQGEALGLVGAQAPATEEQETASSSST) are compositionally biased toward low complexity. In terms of domain architecture, MAGE spans 109–308 (LSRKMAELVH…ISYPPLHEWA (200 aa)).

As to expression, expressed in many tumors of several types, such as melanoma, head and neck squamous cell carcinoma, lung carcinoma and breast carcinoma, but not in normal tissues except for testes.

In terms of biological role, not known, though may play a role tumor transformation or progression. In vitro promotes cell viability in melanoma cell lines. This chain is Melanoma-associated antigen 12 (MAGEA12), found in Homo sapiens (Human).